A 160-amino-acid chain; its full sequence is Nucleotide-binding protein VV1_2655 (160 aa).

It belongs to the YajQ family.

In terms of biological role, nucleotide-binding protein. The polypeptide is Nucleotide-binding protein VV1_2655 (Vibrio vulnificus (strain CMCP6)).